Here is a 380-residue protein sequence, read N- to C-terminus: Putative F-box/kelch-repeat protein At2g44030 (380 aa).

The F-box domain occupies 16–66 (PKSFLSLPYDVVFNCLSRVSRTHDPILSLVSKSFRSLLALPDLEAERFRIL). 2 Kelch repeats span residues 123-170 (EIYL…VIDG) and 172-219 (INVY…ALIK).

The polypeptide is Putative F-box/kelch-repeat protein At2g44030 (Arabidopsis thaliana (Mouse-ear cress)).